Consider the following 265-residue polypeptide: MSWRPPAHNAEGQEGLWYRSVCQSHGAFCGCGDFVGHLNRLAERLGRPQPPRPPGGPPGPAIRVLPALPPAEGSPRRHNRTENQPCGGGDADFGDQRDAGDGGAAADDLSPADVEDLLDWLDAPDRLSKTPVNNPPLTSPVPVESLVQYKLSTRSTSTRASRSTDGTSDVASLGRQLLKECKQNQQMLSFLQQVQNAQEQRSPWPLQETPYLPGRENAKPGKTRPRKKPRAKQKPKKRRRYRSSSNSSSKSNDSSDAESSTCSSN.

Disordered stretches follow at residues 44–110 (RLGR…DDLS), 152–171 (STRSTSTRASRSTDGTSDVA), and 194–265 (VQNA…CSSN). A compositionally biased stretch (pro residues) spans 48–60 (PQPPRPPGGPPGP). The span at 152-168 (STRSTSTRASRSTDGTS) shows a compositional bias: low complexity. The span at 221–242 (GKTRPRKKPRAKQKPKKRRRYR) shows a compositional bias: basic residues. A compositionally biased stretch (low complexity) spans 243–265 (SSSNSSSKSNDSSDAESSTCSSN).

Post-translationally, phosphorylated at C-terminal serines.

This chain is Probable protein VP2, found in Torque teno virus (isolate Human/Germany/KAV/2001) (TTV).